A 412-amino-acid polypeptide reads, in one-letter code: Tyrosine--tRNA ligase (412 aa).

Tyr38 is a binding site for L-tyrosine. A 'HIGH' region motif is present at residues 43 to 52; sequence CTANSLHIGS. 2 residues coordinate L-tyrosine: Tyr170 and Gln174. Residues 230-234 carry the 'KMSKS' region motif; the sequence is KMGKT. Lys233 lines the ATP pocket. Residues 343–409 enclose the S4 RNA-binding domain; that stretch reads IPISKLLHMW…CGKKRRLKVV (67 aa).

The protein belongs to the class-I aminoacyl-tRNA synthetase family. TyrS type 1 subfamily. Homodimer.

Its subcellular location is the cytoplasm. It carries out the reaction tRNA(Tyr) + L-tyrosine + ATP = L-tyrosyl-tRNA(Tyr) + AMP + diphosphate + H(+). Functionally, catalyzes the attachment of tyrosine to tRNA(Tyr) in a two-step reaction: tyrosine is first activated by ATP to form Tyr-AMP and then transferred to the acceptor end of tRNA(Tyr). This is Tyrosine--tRNA ligase from Anaplasma phagocytophilum (strain HZ).